A 344-amino-acid polypeptide reads, in one-letter code: Lysophosphatidic acid receptor 6 (344 aa).

Residues 1–25 (MVSSNGSQCPYDDSFKYTLYGCMFS) are Extracellular-facing. Asn5 carries an N-linked (GlcNAc...) asparagine glycan. The helical transmembrane segment at 26–46 (MVFVLGLISNCVAIYIFICAL) threads the bilayer. Residues 47–56 (KVRNETTTYM) are Cytoplasmic-facing. A helical membrane pass occupies residues 57-77 (INLAMSDLLFVFTLPFRIFYF). Over 78-90 (ATRNWPFGDLLCK) the chain is Extracellular. An intrachain disulfide couples Cys89 to Cys168. Residues 91–111 (ISVMLFYTNMYGSILFLTCIS) traverse the membrane as a helical segment. Residues 112 to 134 (VDRFLAIVYPFKSKTLRTKRNAK) are Cytoplasmic-facing. A helical transmembrane segment spans residues 135–155 (IVCIAVWFTVMGGSAPAVFFQ). Residues 156-183 (STHSQGNNTSEACFENFPAATWKTYLSR) lie on the Extracellular side of the membrane. Asn162 and Asn163 each carry an N-linked (GlcNAc...) asparagine glycan. The chain crosses the membrane as a helical span at residues 184–204 (IVIFIEIVGFFIPLILNVTCS). Residues 205 to 230 (SMVLRTLNKPVTLSRSKMNKTKVLKM) are Cytoplasmic-facing. The chain crosses the membrane as a helical span at residues 231 to 251 (IFVHLVIFCFCFVPYNINLIL). At 252–272 (YSLMRTQTFVNCSVVAAVRTM) the chain is on the extracellular side. Asn262 is a glycosylation site (N-linked (GlcNAc...) asparagine). Residues 273–293 (YPITLCIAVSNCCFDPIVYYF) form a helical membrane-spanning segment. The S-palmitoyl cysteine moiety is linked to residue Cys284. At 294-344 (TSDTIQNSIKMKNWSVRRSDSRFSEVQGTENFIQHNLQTLKNKIFDNESAI) the chain is on the cytoplasmic side.

It belongs to the G-protein coupled receptor 1 family. Ubiquitously expressed. Detected in the hair follicles and skin (at protein level).

The protein localises to the cell membrane. Binds to oleoyl-L-alpha-lysophosphatidic acid (LPA). Intracellular cAMP is involved in the receptor activation. Important for the maintenance of hair growth and texture. This is Lysophosphatidic acid receptor 6 (Lpar6) from Mus musculus (Mouse).